The primary structure comprises 244 residues: DNA repair protein RecO (244 aa).

Belongs to the RecO family.

Its function is as follows. Involved in DNA repair and RecF pathway recombination. The sequence is that of DNA repair protein RecO from Polynucleobacter necessarius subsp. necessarius (strain STIR1).